The primary structure comprises 194 residues: Outer surface 22 kDa lipoprotein (194 aa).

The first 21 residues, 1–21, serve as a signal peptide directing secretion; sequence MYKNGFFKNYLSLLLIFLVIA. Cys22 is lipidated: N-palmitoyl cysteine. Cys22 carries S-diacylglycerol cysteine lipidation.

It is found in the cell outer membrane. This is Outer surface 22 kDa lipoprotein (p22) from Borreliella burgdorferi (strain N40) (Borrelia burgdorferi).